A 1300-amino-acid polypeptide reads, in one-letter code: Phospholipid-transporting ATPase IK (1300 aa).

A compositionally biased stretch (polar residues) spans 1–11 (MGTGPAQTPRS). The segment at 1-98 (MGTGPAQTPR…SLGQREDLQD (98 aa)) is disordered. Topologically, residues 1–149 (MGTGPAQTPR…TAKYNFYSFL (149 aa)) are cytoplasmic. Residues 65–74 (RRHKAQPGRA) show a composition bias toward basic residues. Residues 150–171 (PLNLYEQFHRVSNLFFLIIIIL) traverse the membrane as a helical segment. Over 172-177 (QSIPDI) the chain is Exoplasmic loop. The chain crosses the membrane as a helical span at residues 178 to 197 (STLPWFSLSTPMVCLLFIRA). The Cytoplasmic portion of the chain corresponds to 198–381 (TRDLVDDMGR…TKLDLLMNKL (184 aa)). A helical membrane pass occupies residues 382 to 403 (VVVIFISVVLVCLVLAFGFGFS). Over 404-430 (VKEFKDHHYYLSGVHGSSVAAESFFVF) the chain is Exoplasmic loop. A helical transmembrane segment spans residues 431-452 (WSFLILLSVTIPMSMFILSEFI). At 453-995 (YLGNSVFIDW…GRWSYVRICK (543 aa)) the chain is on the cytoplasmic side. Asp495 serves as the catalytic 4-aspartylphosphate intermediate. Positions 495, 496, 497, 596, 637, 660, 693, 763, 764, 765, 913, and 919 each coordinate ATP. Position 495 (Asp495) interacts with Mg(2+). Position 497 (Thr497) interacts with Mg(2+). Residue Asp939 participates in Mg(2+) binding. Residues Asn942 and Asp943 each contribute to the ATP site. Asp943 is a binding site for Mg(2+). Residues 996–1016 (FLRYFFYKSMASMMVQVWFAC) form a helical membrane-spanning segment. The Exoplasmic loop segment spans residues 1017–1028 (YNGFTGQPLYEG). The helical transmembrane segment at 1029–1048 (WFLALFNLLYSTLPVLYIGL) threads the bilayer. The Cytoplasmic segment spans residues 1049–1078 (FEQDVSAEQSLEKPELYVVGQKDELFNYWV). The chain crosses the membrane as a helical span at residues 1079-1100 (FVQAIAHGVTTSLVNFFMTLWI). Residues 1101–1112 (SRDTAGPASFSD) are Exoplasmic loop-facing. The helical transmembrane segment at 1113–1135 (HQSFAVVVALSCLLSITMEVILI) threads the bilayer. Residues 1136–1141 (IKYWTA) are Cytoplasmic-facing. A helical membrane pass occupies residues 1142-1162 (LCVATILLSLGFYAIMTTTTQ). Topologically, residues 1163 to 1182 (SFWLFRVSPTTFPFLYADLS) are exoplasmic loop. A helical transmembrane segment spans residues 1183-1207 (VMSSPSILLVVLLSVSINTFPVLAL). Over 1208 to 1300 (RVIFPALKEL…EAASSPKESQ (93 aa)) the chain is Cytoplasmic. Residues 1272–1300 (RGPGVSSDIASESLDPSDEEAASSPKESQ) form a disordered region.

It belongs to the cation transport ATPase (P-type) (TC 3.A.3) family. Type IV subfamily. The cofactor is Mg(2+). Isoform 3 was only detected in testis.

The protein resides in the cytoplasmic vesicle. Its subcellular location is the secretory vesicle. It is found in the acrosome membrane. It localises to the endoplasmic reticulum membrane. It catalyses the reaction ATP + H2O + phospholipidSide 1 = ADP + phosphate + phospholipidSide 2.. The catalysed reaction is a 1,2-diacyl-sn-glycero-3-phospho-L-serine(out) + ATP + H2O = a 1,2-diacyl-sn-glycero-3-phospho-L-serine(in) + ADP + phosphate + H(+). Functionally, P4-ATPase flippase which catalyzes the hydrolysis of ATP coupled to the transport of aminophospholipids from the outer to the inner leaflet of various membranes and ensures the maintenance of asymmetric distribution of phospholipids. Phospholipid translocation also seems to be implicated in vesicle formation and in uptake of lipid signaling molecules. May be responsible for the maintenance of asymmetric distribution of phosphatidylserine (PS) in spermatozoa membranes. Involved in acrosome reactions and binding of spermatozoa to zona pellucida. The protein is Phospholipid-transporting ATPase IK of Homo sapiens (Human).